The primary structure comprises 51 residues: Putative antitoxin VapB6 (51 aa).

Functionally, antitoxin component of a possible type II toxin-antitoxin (TA) system. The cognate toxin is VapC6. The polypeptide is Putative antitoxin VapB6 (vapB6) (Mycobacterium tuberculosis (strain CDC 1551 / Oshkosh)).